The primary structure comprises 126 residues: Protein LLP homolog (126 aa).

Residues 1–21 show a composition bias toward basic residues; the sequence is MAKSLRSKWRRKMRAEKRKKV. Disordered stretches follow at residues 1-22 and 53-126; these read MAKSLRSKWRRKMRAEKRKKVA and VPPE…RLAW. The segment covering 73–94 has biased composition (basic and acidic residues); sequence DGGKMDLDTKRNKKTMLDEHGR. Basic residues predominate over residues 103 to 126; it reads QAKKLKAKRVGKNGKPKPKKRLAW.

It belongs to the learning-associated protein family.

The protein resides in the nucleus. Its subcellular location is the nucleolus. It is found in the chromosome. Functionally, regulates dendritic and spine growth and synaptic transmission. The sequence is that of Protein LLP homolog (llph) from Danio rerio (Zebrafish).